The primary structure comprises 279 residues: Oxygen-dependent coproporphyrinogen-III oxidase (279 aa).

Ser102 contributes to the substrate binding site. A divalent metal cation-binding residues include His106 and His116. His116 functions as the Proton donor in the catalytic mechanism. 118–120 (NTR) contributes to the substrate binding site. Positions 149 and 179 each coordinate a divalent metal cation. The important for dimerization stretch occupies residues 244-279 (YVEFNLLYDRGTKFGLMTDGNVEAILMSLPPEVKFN).

It belongs to the aerobic coproporphyrinogen-III oxidase family. In terms of assembly, homodimer. It depends on a divalent metal cation as a cofactor.

The protein localises to the cytoplasm. It catalyses the reaction coproporphyrinogen III + O2 + 2 H(+) = protoporphyrinogen IX + 2 CO2 + 2 H2O. The protein operates within porphyrin-containing compound metabolism; protoporphyrin-IX biosynthesis; protoporphyrinogen-IX from coproporphyrinogen-III (O2 route): step 1/1. Its function is as follows. Involved in the heme biosynthesis. Catalyzes the aerobic oxidative decarboxylation of propionate groups of rings A and B of coproporphyrinogen-III to yield the vinyl groups in protoporphyrinogen-IX. This is Oxygen-dependent coproporphyrinogen-III oxidase from Rickettsia rickettsii (strain Iowa).